Reading from the N-terminus, the 85-residue chain is Protein U62 (85 aa).

This sequence belongs to the herpesviridae UL91 family.

In Homo sapiens (Human), this protein is Protein U62 (U62).